Here is a 284-residue protein sequence, read N- to C-terminus: 2-dehydro-3-deoxyphosphooctonate aldolase (284 aa).

It belongs to the KdsA family.

Its subcellular location is the cytoplasm. The catalysed reaction is D-arabinose 5-phosphate + phosphoenolpyruvate + H2O = 3-deoxy-alpha-D-manno-2-octulosonate-8-phosphate + phosphate. The protein operates within carbohydrate biosynthesis; 3-deoxy-D-manno-octulosonate biosynthesis; 3-deoxy-D-manno-octulosonate from D-ribulose 5-phosphate: step 2/3. It participates in bacterial outer membrane biogenesis; lipopolysaccharide biosynthesis. The sequence is that of 2-dehydro-3-deoxyphosphooctonate aldolase from Methylobacterium radiotolerans (strain ATCC 27329 / DSM 1819 / JCM 2831 / NBRC 15690 / NCIMB 10815 / 0-1).